A 208-amino-acid chain; its full sequence is UPF0711 protein C18orf21 homolog (208 aa).

Positions 123–137 (SKHKSTPGSASKHRT) are enriched in basic residues. Disordered stretches follow at residues 123–180 (SKHK…KSSP) and 189–208 (MLEN…LSSL). Positions 138–152 (PQTVNWATPKSVANR) are enriched in polar residues. Residues 153-180 (TPSSTPRSASSNTSSSSSSKSSSVKSSP) are compositionally biased toward low complexity.

The protein belongs to the UPF0711 family.

This chain is UPF0711 protein C18orf21 homolog, found in Danio rerio (Zebrafish).